The following is a 30-amino-acid chain: M-poneritoxin-Ng3a (30 aa).

In terms of tissue distribution, expressed by the venom gland.

The protein resides in the secreted. Shows a broad spectrum of activity against both Gram-positive and Gram-negative bacteria. Also has antimicrobial activity against S.cerevisiae. Has insecticidal and non-hemolytic activity. The protein is M-poneritoxin-Ng3a of Neoponera goeldii (Ponerine ant).